A 679-amino-acid polypeptide reads, in one-letter code: UvrABC system protein B (679 aa).

The region spanning 31–414 is the Helicase ATP-binding domain; the sequence is ENLTDGLAHQ…ELEKSGTEII (384 aa). 44-51 contacts ATP; sequence GVTGSGKT. Residues 97-120 carry the Beta-hairpin motif; that stretch reads YYDYYQPEAYVPSSDTFIEKDASI. The Helicase C-terminal domain maps to 436-589; sequence QVDDLLSEAR…QIKYNEEHGI (154 aa). Residues 639–674 form the UVR domain; the sequence is QQQIKKLEQQMYKFAQDLEFEKAAAIRDQLHQLREQ.

It belongs to the UvrB family. Forms a heterotetramer with UvrA during the search for lesions. Interacts with UvrC in an incision complex.

It is found in the cytoplasm. The UvrABC repair system catalyzes the recognition and processing of DNA lesions. A damage recognition complex composed of 2 UvrA and 2 UvrB subunits scans DNA for abnormalities. Upon binding of the UvrA(2)B(2) complex to a putative damaged site, the DNA wraps around one UvrB monomer. DNA wrap is dependent on ATP binding by UvrB and probably causes local melting of the DNA helix, facilitating insertion of UvrB beta-hairpin between the DNA strands. Then UvrB probes one DNA strand for the presence of a lesion. If a lesion is found the UvrA subunits dissociate and the UvrB-DNA preincision complex is formed. This complex is subsequently bound by UvrC and the second UvrB is released. If no lesion is found, the DNA wraps around the other UvrB subunit that will check the other stand for damage. The protein is UvrABC system protein B of Haemophilus influenzae (strain 86-028NP).